The sequence spans 547 residues: Chaperonin GroEL (547 aa).

ATP is bound by residues 30–33, Lys-51, 87–91, Gly-415, and Asp-496; these read TLGP and DGTTT.

This sequence belongs to the chaperonin (HSP60) family. In terms of assembly, forms a cylinder of 14 subunits composed of two heptameric rings stacked back-to-back. Interacts with the co-chaperonin GroES.

It is found in the cytoplasm. It catalyses the reaction ATP + H2O + a folded polypeptide = ADP + phosphate + an unfolded polypeptide.. In terms of biological role, together with its co-chaperonin GroES, plays an essential role in assisting protein folding. The GroEL-GroES system forms a nano-cage that allows encapsulation of the non-native substrate proteins and provides a physical environment optimized to promote and accelerate protein folding. The sequence is that of Chaperonin GroEL from Actinobacillus pleuropneumoniae (Haemophilus pleuropneumoniae).